Here is a 321-residue protein sequence, read N- to C-terminus: ATP phosphoribosyltransferase regulatory subunit (321 aa).

Belongs to the class-II aminoacyl-tRNA synthetase family. HisZ subfamily. As to quaternary structure, heteromultimer composed of HisG and HisZ subunits.

The protein localises to the cytoplasm. It functions in the pathway amino-acid biosynthesis; L-histidine biosynthesis; L-histidine from 5-phospho-alpha-D-ribose 1-diphosphate: step 1/9. Required for the first step of histidine biosynthesis. May allow the feedback regulation of ATP phosphoribosyltransferase activity by histidine. The polypeptide is ATP phosphoribosyltransferase regulatory subunit (Thiobacillus denitrificans (strain ATCC 25259 / T1)).